Consider the following 568-residue polypeptide: uncharacterized protein (568 aa).

Positions 334–346 (DDNEEKNNDRPKI) are enriched in basic and acidic residues. Disordered regions lie at residues 334-382 (DDNE…NDQN) and 436-479 (QVEE…SCKN). A compositionally biased stretch (low complexity) spans 458–477 (KIASSASKNDNSNNKNSKSC).

The protein to yeast YJL043w.

This is an uncharacterized protein from Saccharomyces cerevisiae (strain ATCC 204508 / S288c) (Baker's yeast).